A 60-amino-acid polypeptide reads, in one-letter code: Large ribosomal subunit protein uL30 (60 aa).

Belongs to the universal ribosomal protein uL30 family. As to quaternary structure, part of the 50S ribosomal subunit.

The sequence is that of Large ribosomal subunit protein uL30 from Streptomyces coelicolor (strain ATCC BAA-471 / A3(2) / M145).